The chain runs to 263 residues: Probable WRKY transcription factor 62 (263 aa).

The interval 59–104 is disordered; the sequence is DHQDDQSNNSSPQDSSPVLESSRKPLHKRGRKTSMAESSDYHRHES. The segment covering 64–74 has biased composition (low complexity); sequence QSNNSSPQDSS. The segment at residues 104–174 is a DNA-binding region (WRKY); it reads SSTPIYHDGF…GQHICQLHQA (71 aa).

The protein belongs to the WRKY group III family.

It is found in the nucleus. In terms of biological role, transcription factor. Interacts specifically with the W box (5'-(T)TGAC[CT]-3'), a frequently occurring elicitor-responsive cis-acting element. The polypeptide is Probable WRKY transcription factor 62 (WRKY62) (Arabidopsis thaliana (Mouse-ear cress)).